The following is a 143-amino-acid chain: Large ribosomal subunit protein uL11 (143 aa).

This sequence belongs to the universal ribosomal protein uL11 family. In terms of assembly, part of the ribosomal stalk of the 50S ribosomal subunit. Interacts with L10 and the large rRNA to form the base of the stalk. L10 forms an elongated spine to which L12 dimers bind in a sequential fashion forming a multimeric L10(L12)X complex. Post-translationally, one or more lysine residues are methylated.

Its function is as follows. Forms part of the ribosomal stalk which helps the ribosome interact with GTP-bound translation factors. In Bifidobacterium longum subsp. infantis (strain ATCC 15697 / DSM 20088 / JCM 1222 / NCTC 11817 / S12), this protein is Large ribosomal subunit protein uL11.